Reading from the N-terminus, the 692-residue chain is MAREFSLEKTRNIGIMAHIDAGKTTTTERILFYTGRIHKIGETHEGASQMDWMEQEQERGITITSAATTAQWKGYRVNIIDTPGHVDFTVEVERSLRVLDGAVAVLDAQSGVEPQTETVWRQATTYGVPRIVFVNKMDKTGADFLYSVGTLRDRLEANAHAIQLPIGAEDNFEGIIDLVENVAYYYEDDLGTRSEAREIPAEYKDKAEELRASLIEAVAELDEELMMKYLEGEEITVDELKAAIRKGTCNVEFYPVLCGSAFKNKGVQLVLDAVLDYLPAPTDVPAIKGTLPDSDEEVTRESSDDAPFSALAFKVMTDPYVGKLTFFRVYSGTLDSGSYVRNSTKGKRERVGRILQMHANSREEISTVYAGDIAAAVGLKDTTTGDTLCDEKNLVILESMEFPEPVIHVAIEPKSKADQDKMSTALAKLAEEDPTFRAHTDPETGQTIIGGMGELHLDIIVDRMKREFKVEANVGAPQVAYRETFRASAQVEGKFVRQSGGRGQFGHVWIEFSPNEEGKGFEFENAIVGGVVPREYIPAVQAGLEDALQNGVVAGYPVIDIKAKLFDGSYHDVDSNEMAFKIAASMALKNAASKCNPVILEPISKVEVVIPEEYMGDIMGDITSRRGRVEGMEGRGNAQVVRAMVPLSEMFGYATALRSNTQGRGTFTMVFDHYEEVPKSIADEIIKKNQGE.

Positions 8–282 (EKTRNIGIMA…AVLDYLPAPT (275 aa)) constitute a tr-type G domain. Residues 17-24 (AHIDAGKT), 81-85 (DTPGH), and 135-138 (NKMD) each bind GTP.

Belongs to the TRAFAC class translation factor GTPase superfamily. Classic translation factor GTPase family. EF-G/EF-2 subfamily.

It localises to the cytoplasm. Its function is as follows. Catalyzes the GTP-dependent ribosomal translocation step during translation elongation. During this step, the ribosome changes from the pre-translocational (PRE) to the post-translocational (POST) state as the newly formed A-site-bound peptidyl-tRNA and P-site-bound deacylated tRNA move to the P and E sites, respectively. Catalyzes the coordinated movement of the two tRNA molecules, the mRNA and conformational changes in the ribosome. This chain is Elongation factor G, found in Bacillus licheniformis (strain ATCC 14580 / DSM 13 / JCM 2505 / CCUG 7422 / NBRC 12200 / NCIMB 9375 / NCTC 10341 / NRRL NRS-1264 / Gibson 46).